The sequence spans 644 residues: UvrABC system protein C (644 aa).

In terms of domain architecture, GIY-YIG spans 47–125; sequence ARPGVYRMLD…IKRYRPPYNV (79 aa). Residues 235-270 enclose the UVR domain; the sequence is TAVQKRLGEAMTRAADAMDFEQAAVLRDRLKALTFI.

This sequence belongs to the UvrC family. Interacts with UvrB in an incision complex.

Its subcellular location is the cytoplasm. Its function is as follows. The UvrABC repair system catalyzes the recognition and processing of DNA lesions. UvrC both incises the 5' and 3' sides of the lesion. The N-terminal half is responsible for the 3' incision and the C-terminal half is responsible for the 5' incision. This Sphingopyxis alaskensis (strain DSM 13593 / LMG 18877 / RB2256) (Sphingomonas alaskensis) protein is UvrABC system protein C.